The chain runs to 306 residues: Voltage-dependent anion channel-forming protein RSc3414 (306 aa).

4 helical membrane passes run 28–48 (LFLIFCISLVAMAVHVHWLPI), 50–70 (VNLSTTPFSLIGIALAVFLGF), 213–233 (YSVMIHRTVYFFCAALPFGLV), and 239–259 (FTPVFSVFVAYAFMAHEAIAA).

It belongs to the anion channel-forming bestrophin (TC 1.A.46) family.

It localises to the cell membrane. In Ralstonia nicotianae (strain ATCC BAA-1114 / GMI1000) (Ralstonia solanacearum), this protein is Voltage-dependent anion channel-forming protein RSc3414.